Reading from the N-terminus, the 248-residue chain is ATP synthase subunit a (248 aa).

A run of 6 helical transmembrane segments spans residues 27–47 (FTNSSAYMFGTVALIAILMLV), 83–103 (FFPLVFSLFMFIAVSNLIGIV), 113–133 (LIVTVALALLVFFTVLIYGFS), 142–162 (LFVPSGVPIYILPLVVFIEVI), 192–212 (FVAMLGALGVVGWFGAVLPLG), and 215–235 (IALTALELLVAFLQAYVFAIL).

It belongs to the ATPase A chain family. In terms of assembly, F-type ATPases have 2 components, CF(1) - the catalytic core - and CF(0) - the membrane proton channel. CF(1) has five subunits: alpha(3), beta(3), gamma(1), delta(1), epsilon(1). CF(0) has four main subunits: a, b, b' and c.

It localises to the cell inner membrane. Functionally, key component of the proton channel; it plays a direct role in the translocation of protons across the membrane. This is ATP synthase subunit a from Rhodopseudomonas palustris (strain ATCC BAA-98 / CGA009).